Consider the following 242-residue polypeptide: Probable 2-phosphosulfolactate phosphatase (242 aa).

The protein belongs to the ComB family. Mg(2+) serves as cofactor.

It carries out the reaction (2R)-O-phospho-3-sulfolactate + H2O = (2R)-3-sulfolactate + phosphate. The protein is Probable 2-phosphosulfolactate phosphatase of Caldicellulosiruptor saccharolyticus (strain ATCC 43494 / DSM 8903 / Tp8T 6331).